The chain runs to 1584 residues: Sterile alpha motif domain-containing protein 9-like (1584 aa).

One can recognise an SAM domain in the interval 14-79 (WTKEHVKKWV…RSYNKLNSKS (66 aa)). A disordered region spans residues 76–122 (NSKSPESDNHDPGQLDNSKPSKTEHQKNPKHTKKEEENSMSSNIDYD). Positions 80–112 (PESDNHDPGQLDNSKPSKTEHQKNPKHTKKEEE) are enriched in basic and acidic residues.

As to quaternary structure, interacts with EEA1. In terms of tissue distribution, widely expressed in adult and fetal tissues. Expressed in the cerebellum. Variable expression in tumors. Down-regulated in breast cancer.

Its subcellular location is the early endosome. It is found in the mitochondrion. Functionally, may be involved in endosome fusion. Mediates down-regulation of growth factor signaling via internalization of growth factor receptors. The chain is Sterile alpha motif domain-containing protein 9-like (SAMD9L) from Homo sapiens (Human).